Here is a 739-residue protein sequence, read N- to C-terminus: AN1-type zinc finger protein 4 (739 aa).

The Ubiquitin-like domain maps to Met54 to Gly129. Positions Lys246 to Pro255 are enriched in basic residues. Disordered stretches follow at residues Lys246–Ala270 and Leu287–Ser316. Residues Lys673–Gly720 form an AN1-type zinc finger. Zn(2+) is bound by residues Cys679, Cys682, Cys694, Cys696, Cys701, His704, His710, and Cys712.

This Mus musculus (Mouse) protein is AN1-type zinc finger protein 4 (Zfand4).